The following is a 142-amino-acid chain: FAD synthase (142 aa).

Residues 9-10 (TF), 14-17 (HPGH), and Asp92 contribute to the ATP site.

Belongs to the archaeal FAD synthase family. As to quaternary structure, homodimer. A divalent metal cation is required as a cofactor.

The catalysed reaction is FMN + ATP + H(+) = FAD + diphosphate. It functions in the pathway cofactor biosynthesis; FAD biosynthesis; FAD from FMN: step 1/1. In terms of biological role, catalyzes the transfer of the AMP portion of ATP to flavin mononucleotide (FMN) to produce flavin adenine dinucleotide (FAD) coenzyme. This is FAD synthase from Halalkalicoccus jeotgali (strain DSM 18796 / CECT 7217 / JCM 14584 / KCTC 4019 / B3).